The following is a 109-amino-acid chain: Anti-sigma-B factor antagonist (109 aa).

The region spanning 3–109 (INVDVKQNEN…ISAKSEGGVQ (107 aa)) is the STAS domain. Residues S52 and S56 each carry the phosphoserine modification. T57 is modified (phosphothreonine).

Belongs to the anti-sigma-factor antagonist family. Monomer. In stressed cells, forms a complex with RsbW. The predominant form of this complex has a stoichiometry of 2:2 (one dimer of RsbW is bound by two monomers of RsbV). Binds to RsbW in the presence of low levels of ATP or under conditions of energy or environmental stress (through dephosphorylation by RsbP or RsbU). In terms of processing, phosphorylated by RsbW on a serine residue. Dephosphorylated by RsbP or RsbU.

Its function is as follows. Positive regulator of sigma-B activity. Non-phosphorylated RsbV binds to RsbW, preventing its association with sigma-B. When phosphorylated, releases RsbW, which is then free to complex with and inactivate sigma-B. In Bacillus subtilis (strain 168), this protein is Anti-sigma-B factor antagonist (rsbV).